Consider the following 253-residue polypeptide: MALPLLQYKPSSQNHRVTSFGAADQNEDTPYIYRIEDVSSYTDIQNIIWASYRQVFSEHEILKFNRQKTLESQVKNGSISVRDFIRGLAKSEAFYRLVVSVNNNYRLVDITLKRLLGRSSYNKDEQIAWSIVIGTKGFSGFVDALIDSEEYTKNFGENIVPYQRKRMEGRPHNLVTPRYGEDFQEKAGTVQTDWRFTLDKFYSRKSQEKQLREGDPRKFADLAASVGNQGNYAQRISAFDIDYLNAVPNRSRR.

The region spanning 11-191 is the PBS-linker domain; sequence SSQNHRVTSF…DFQEKAGTVQ (181 aa).

It belongs to the phycobilisome linker protein family. Part of the phycobilisome, a hemidiscoidal structure that is composed of two distinct substructures: a core complex and a number of rods radiating from the core.

It is found in the cellular thylakoid membrane. In terms of biological role, rod-core linker protein required for attachment of phycocyanin to allophycocyanin in cores of phycobilisomes. Linker polypeptides determine the state of aggregation and the location of the disk-shaped phycobiliprotein units within the phycobilisome and modulate their spectroscopic properties in order to mediate a directed and optimal energy transfer. This Nostoc sp. (strain PCC 7120 / SAG 25.82 / UTEX 2576) protein is Phycobilisome rod-core linker polypeptide CpcG4.